The following is a 366-amino-acid chain: Chorismate synthase (366 aa).

NADP(+) is bound by residues R48 and R54. Residues 125–127 (RSS), 241–242 (NA), G285, 300–304 (KPTSS), and R326 each bind FMN.

Belongs to the chorismate synthase family. In terms of assembly, homotetramer. FMNH2 is required as a cofactor.

The enzyme catalyses 5-O-(1-carboxyvinyl)-3-phosphoshikimate = chorismate + phosphate. It functions in the pathway metabolic intermediate biosynthesis; chorismate biosynthesis; chorismate from D-erythrose 4-phosphate and phosphoenolpyruvate: step 7/7. Its function is as follows. Catalyzes the anti-1,4-elimination of the C-3 phosphate and the C-6 proR hydrogen from 5-enolpyruvylshikimate-3-phosphate (EPSP) to yield chorismate, which is the branch point compound that serves as the starting substrate for the three terminal pathways of aromatic amino acid biosynthesis. This reaction introduces a second double bond into the aromatic ring system. This chain is Chorismate synthase, found in Cereibacter sphaeroides (strain ATCC 17023 / DSM 158 / JCM 6121 / CCUG 31486 / LMG 2827 / NBRC 12203 / NCIMB 8253 / ATH 2.4.1.) (Rhodobacter sphaeroides).